Consider the following 226-residue polypeptide: Ribonuclease 3 (226 aa).

One can recognise an RNase III domain in the interval 6-128 (INRLQRKLGY…LIGGVFLDSD (123 aa)). Mg(2+) is bound at residue Glu-41. Residue Asp-45 is part of the active site. 2 residues coordinate Mg(2+): Asp-114 and Glu-117. Glu-117 is an active-site residue. One can recognise a DRBM domain in the interval 155–225 (DPKTRLQEYL…AEQALKQLEL (71 aa)).

It belongs to the ribonuclease III family. Homodimer. Mg(2+) serves as cofactor.

It is found in the cytoplasm. The enzyme catalyses Endonucleolytic cleavage to 5'-phosphomonoester.. Its function is as follows. Digests double-stranded RNA. Involved in the processing of primary rRNA transcript to yield the immediate precursors to the large and small rRNAs (23S and 16S). Processes some mRNAs, and tRNAs when they are encoded in the rRNA operon. Processes pre-crRNA and tracrRNA of type II CRISPR loci if present in the organism. This is Ribonuclease 3 from Yersinia pseudotuberculosis serotype O:1b (strain IP 31758).